A 623-amino-acid chain; its full sequence is Endoglucanase 12 (623 aa).

The Cytoplasmic portion of the chain corresponds to 1–73; sequence MYSANHWGGS…LGCVVVKRKL (73 aa). A helical; Signal-anchor for type II membrane protein membrane pass occupies residues 74 to 94; it reads LWWVLWTLLAAFILIGLPVII. At 95 to 623 the chain is on the extracellular side; the sequence is AKSIPKKKPH…TPPPPSKWKP (529 aa). Residue aspartate 166 is the Nucleophile of the active site. N-linked (GlcNAc...) asparagine glycans are attached at residues asparagine 217, asparagine 236, asparagine 324, asparagine 345, asparagine 408, and asparagine 425. Residues histidine 513, aspartate 561, and glutamate 570 contribute to the active site.

Belongs to the glycosyl hydrolase 9 (cellulase E) family. In terms of tissue distribution, ubiquitous.

It localises to the membrane. It carries out the reaction Endohydrolysis of (1-&gt;4)-beta-D-glucosidic linkages in cellulose, lichenin and cereal beta-D-glucans.. The polypeptide is Endoglucanase 12 (GLU3) (Oryza sativa subsp. japonica (Rice)).